The chain runs to 364 residues: F-box/kelch-repeat protein At3g23880 (364 aa).

The F-box domain occupies 8 to 54; it reads MFSPHNLPLEMMEEILLRLPVKSLTRFKCVCSSWRSLISETLFALKH. 2 Kelch repeats span residues 169-215 and 216-265; these read DYKV…SRSG and IYIN…TLGD.

This Arabidopsis thaliana (Mouse-ear cress) protein is F-box/kelch-repeat protein At3g23880.